The chain runs to 216 residues: uncharacterized protein (216 aa).

This is an uncharacterized protein from Caenorhabditis elegans.